A 396-amino-acid polypeptide reads, in one-letter code: Aspartate aminotransferase (396 aa).

L-aspartate is bound by residues Gly-34, Trp-130, and Asn-183. N6-(pyridoxal phosphate)lysine is present on Lys-246. Arg-374 is an L-aspartate binding site.

The protein belongs to the class-I pyridoxal-phosphate-dependent aminotransferase family. Homodimer. Pyridoxal 5'-phosphate is required as a cofactor.

It localises to the cytoplasm. It catalyses the reaction L-aspartate + 2-oxoglutarate = oxaloacetate + L-glutamate. This chain is Aspartate aminotransferase (aspC), found in Salmonella typhi.